The chain runs to 204 residues: Dephospho-CoA kinase (204 aa).

In terms of domain architecture, DPCK spans 3–204 (VIGLTGGIGS…DRLDLAYRAH (202 aa)). 11-16 (GSGKSY) lines the ATP pocket.

The protein belongs to the CoaE family.

It localises to the cytoplasm. The enzyme catalyses 3'-dephospho-CoA + ATP = ADP + CoA + H(+). The protein operates within cofactor biosynthesis; coenzyme A biosynthesis; CoA from (R)-pantothenate: step 5/5. Functionally, catalyzes the phosphorylation of the 3'-hydroxyl group of dephosphocoenzyme A to form coenzyme A. In Ralstonia nicotianae (strain ATCC BAA-1114 / GMI1000) (Ralstonia solanacearum), this protein is Dephospho-CoA kinase.